The following is a 122-amino-acid chain: Acidic phospholipase A2 BlatPLA2 (122 aa).

Cystine bridges form between Cys26/Cys115, Cys28/Cys44, Cys43/Cys95, Cys49/Cys122, Cys50/Cys88, Cys57/Cys81, and Cys75/Cys86. Ca(2+) contacts are provided by Tyr27, Gly29, and Gly31. His47 is an active-site residue. Position 48 (Asp48) interacts with Ca(2+). Residue Asp89 is part of the active site.

The protein belongs to the phospholipase A2 family. Group II subfamily. D49 sub-subfamily. Monomer. It depends on Ca(2+) as a cofactor. Expressed by the venom gland.

The protein resides in the secreted. It carries out the reaction a 1,2-diacyl-sn-glycero-3-phosphocholine + H2O = a 1-acyl-sn-glycero-3-phosphocholine + a fatty acid + H(+). Its function is as follows. Acidic phospholipase A2 (PLA2) that only causes a mild edema, when subcutaneously injected in the mice foot. PLA2 catalyzes the calcium-dependent hydrolysis of the 2-acyl groups in 3-sn-phosphoglycerides. This Bothriechis lateralis (Side-striped palm pitviper) protein is Acidic phospholipase A2 BlatPLA2.